A 785-amino-acid chain; its full sequence is MRLSLWGSLLFFSFFVKHLTSLDPNTDAYHLSSFFSAMRLPNSPQAHTFSSLCSWPGVVVCDSSENVLHISASGLDLSGSIPDNTIGKMSKLQTLDLSGNKITSLPSDLWSLSLLESLNLSSNRISEPLPSNIGNFMSLHTLDLSFNSISGKIPAAISNLVNLTTLKLHNNDFQFGVPPELVHCRSLLSIDLSSNRLNESLPVGFGSAFPLLKSLNLSRNLFQGSLIGVLHENVETVDLSENRFDGHILQLIPGHKHNWSSLIHLDLSDNSFVGHIFNGLSSAHKLGHLNLACNRFRAQEFPEIGKLSALHYLNLSRTNLTNIIPREISRLSHLKVLDLSSNNLTGHVPMLSVKNIEVLDLSLNKLDGDIPRPLLEKLAMMQRFNFSFNNLTFCNPNFSQETIQRSFINIRNNCPFAAKPIITKGKKVNKKNTGLKIGLGLAISMAFLLIGLLLILVALRVRRKSRTWATKLAINNTEPNSPDQHDSTTDIKQATQIPVVMIDKPLMKMTLADLKAATFNFDRGTMLWEGKSGPTYGAVLPGGFRAALKVIPSGTTLTDTEVSIAFERLARINHPNLFPLCGYCIATEQRIAIYEDLDMVNLQSLLHNNGDDSAPWRLRHKIALGTARALAFLHHGCIPPMVHGEVKAATILLDSSQEPRLADFGLVKLLDEQFPGSESLDGYTPPEQERNASPTLESDVYSFGVVLLELVSGKKPEGDLVNWVRGLVRQGQGLRAIDPTMQETVPEDEIAEAVKIGYLCTADLPWKRPTMQQVVGLLKDISPNY.

A signal peptide spans 1–21; the sequence is MRLSLWGSLLFFSFFVKHLTS. The Extracellular portion of the chain corresponds to 22 to 436; it reads LDPNTDAYHL…KVNKKNTGLK (415 aa). 14 LRR repeats span residues 64 to 88, 89 to 112, 114 to 136, 138 to 160, 161 to 184, 186 to 208, 210 to 232, 236 to 258, 259 to 283, 284 to 306, 307 to 330, 331 to 355, 357 to 377, and 379 to 405; these read SENV…TIGK, MSKL…LWSL, LLES…IGNF, SLHT…ISNL, VNLT…LVHC, SLLS…FGSA, PLLK…VLHE, TVDL…HKHN, WSSL…LSSA, HKLG…EIGK, LSAL…EISR, LSHL…SVKN, EVLD…LLEK, and AMMQ…TIQR. An N-linked (GlcNAc...) asparagine glycan is attached at Asn-119. N-linked (GlcNAc...) asparagine glycans are attached at residues Asn-162, Asn-198, Asn-216, and Asn-258. N-linked (GlcNAc...) asparagine glycosylation is found at Asn-314, Asn-319, and Asn-343. Asn-385, Asn-390, and Asn-397 each carry an N-linked (GlcNAc...) asparagine glycan. A helical membrane pass occupies residues 437–457; it reads IGLGLAISMAFLLIGLLLILV. Topologically, residues 458 to 785 are cytoplasmic; that stretch reads ALRVRRKSRT…GLLKDISPNY (328 aa). A phosphothreonine mark is found at Thr-510 and Thr-518. The region spanning 521 to 785 is the Protein kinase domain; sequence FDRGTMLWEG…GLLKDISPNY (265 aa). ATP is bound by residues 527–535 and Lys-549; that span reads LWEGKSGPT. A phosphotyrosine mark is found at Tyr-594 and Tyr-683.

This sequence belongs to the protein kinase superfamily. Ser/Thr protein kinase family.

The protein localises to the cell membrane. This is Probably inactive leucine-rich repeat receptor-like protein kinase At5g58150 from Arabidopsis thaliana (Mouse-ear cress).